The following is a 513-amino-acid chain: MQLNSTEIAELIKQRIAQFDIKSEARNEGTIVSVSDGIIRIHGLADAMQGEMIELPGNRYALALNLERDSVGAVIMGSYDGLSEGMKVKGTGRILEVPVGRGLLGRVLNTLGQPIDGKGPIDNDGFSPIEVIAPGVIERKSVDQPVQTGLKAIDAMIPIGRGQRELIIGDRQVGKTAIAIDTIINQKDSGIKCVYVAIGQKASTIANVVRKLEEHGALANTIVVVASASEAAALQYLAPYAGCSMGEYFRDRGEDALIIYDDLSKQAVAYRQISLLLRRPPGREAYPGDVFYLHSRLLERAARVNAEYVEKFTNGAVKGQTGSLTALPIIETQAGDVSAFVPTNVISITDGQIFLTSQLFNSGIRPAVDPGISVSRVGGAAQTKIVKKLSGGIRTALAQYRELAAFAQFSSDLDDATRKQLDHGQKVTELMKQKQYSPLSVAHQSLVLFAAEKGYLSDVELNKIVDFEAALLSYANTQHAELMAEINAKADYNDAIVGKLTALLDDFKATQTW.

169–176 (GDRQVGKT) lines the ATP pocket.

It belongs to the ATPase alpha/beta chains family. F-type ATPases have 2 components, CF(1) - the catalytic core - and CF(0) - the membrane proton channel. CF(1) has five subunits: alpha(3), beta(3), gamma(1), delta(1), epsilon(1). CF(0) has three main subunits: a(1), b(2) and c(9-12). The alpha and beta chains form an alternating ring which encloses part of the gamma chain. CF(1) is attached to CF(0) by a central stalk formed by the gamma and epsilon chains, while a peripheral stalk is formed by the delta and b chains.

The protein resides in the cell inner membrane. It carries out the reaction ATP + H2O + 4 H(+)(in) = ADP + phosphate + 5 H(+)(out). Its function is as follows. Produces ATP from ADP in the presence of a proton gradient across the membrane. The alpha chain is a regulatory subunit. The sequence is that of ATP synthase subunit alpha from Aeromonas hydrophila subsp. hydrophila (strain ATCC 7966 / DSM 30187 / BCRC 13018 / CCUG 14551 / JCM 1027 / KCTC 2358 / NCIMB 9240 / NCTC 8049).